The chain runs to 1004 residues: Ovochymase-2 (1004 aa).

Positions 1–19 are cleaved as a signal peptide; the sequence is MPTRNLLLGSILLSLAVKG. A propeptide spans 20-45 (activation peptide); it reads DPGPHRGARCGVSPLGSATELNYLSR. A Peptidase S1 1 domain is found at 46 to 295; it reads IVGGRESKKG…LLGWVSSQLN (250 aa). The cysteines at positions 71 and 87 are disulfide-linked. The active-site Charge relay system is His86. Glu113 contacts Ca(2+). The N-linked (GlcNAc...) asparagine glycan is linked to Asn128. Asp136 (charge relay system) is an active-site residue. Disulfide bonds link Cys170/Cys240, Cys201/Cys219, and Cys230/Cys259. The Charge relay system role is filled by Ser234. CUB domains lie at 309 to 419 and 429 to 541; these read QDGV…YSAV and CGSF…FTFV. Asn351 carries N-linked (GlcNAc...) asparagine glycosylation. Cys363 and Cys382 form a disulfide bridge. Residue Asn408 is glycosylated (N-linked (GlcNAc...) asparagine). Cystine bridges form between Cys429–Cys456 and Cys483–Cys504. Residues 547 to 558 are compositionally biased toward polar residues; it reads VEDSRQGNMPST. Positions 547 to 566 are disordered; that stretch reads VEDSRQGNMPSTNKKETTAQ. Residues 580-820 enclose the Peptidase S1 2 domain; the sequence is IYNSIAKVEE…FIDWIRQIMS (241 aa). Positions 584 to 1004 are cleaved as a propeptide — activation peptide; it reads IAKVEEAVPH…VVPDSDSSEP (421 aa). 4 cysteine pairs are disulfide-bonded: Cys609–Cys625, Cys706–Cys776, Cys737–Cys754, and Cys766–Cys796. N-linked (GlcNAc...) asparagine glycosylation is present at Asn763. Asn940 carries an N-linked (GlcNAc...) asparagine glycan.

This sequence belongs to the peptidase S1 family. In terms of processing, the catalytically inactive 110 kDa form is processed both N- and C-terminally to give rise to the 66 kDa catalytically active form. In terms of tissue distribution, specifically expressed in the pars recta oviduct.

It localises to the secreted. It catalyses the reaction Preferential cleavage at 371-Gly-Ser-Arg-|-Trp-374 of glycoprotein gp43 in Xenopus laevis coelemic egg envelope to yield gp41.. Converts the glycoprotein envelope surrounding the egg from an unfertilizable to a fertilizable form during its transit through the pars recta portion of the oviduct by selectively hydrolyzing the envelope glycoprotein gp43. The egg envelope is converted to a sperm-penetrable form, via an increase in sperm binding. The protein is Ovochymase-2 (ovch2) of Xenopus laevis (African clawed frog).